The sequence spans 177 residues: MAEFATIARPYAKALFGLAQEKSQIESWLGGLEKLAAVVQEGKVASLIDRPETNASEKADILIDLVGLKDKELKNFVIVLAGQKRLSILPEVYAQYQDLTLSFNHIKSAVIYSAYPLTDKQVGELAQMLNKRFDSELKISVEIEPELIGGIKVEVGDQVLDLSVQGKLSALYTTMTN.

Belongs to the ATPase delta chain family. In terms of assembly, F-type ATPases have 2 components, F(1) - the catalytic core - and F(0) - the membrane proton channel. F(1) has five subunits: alpha(3), beta(3), gamma(1), delta(1), epsilon(1). F(0) has three main subunits: a(1), b(2) and c(10-14). The alpha and beta chains form an alternating ring which encloses part of the gamma chain. F(1) is attached to F(0) by a central stalk formed by the gamma and epsilon chains, while a peripheral stalk is formed by the delta and b chains.

The protein localises to the cell inner membrane. Functionally, f(1)F(0) ATP synthase produces ATP from ADP in the presence of a proton or sodium gradient. F-type ATPases consist of two structural domains, F(1) containing the extramembraneous catalytic core and F(0) containing the membrane proton channel, linked together by a central stalk and a peripheral stalk. During catalysis, ATP synthesis in the catalytic domain of F(1) is coupled via a rotary mechanism of the central stalk subunits to proton translocation. Its function is as follows. This protein is part of the stalk that links CF(0) to CF(1). It either transmits conformational changes from CF(0) to CF(1) or is implicated in proton conduction. This Neisseria meningitidis serogroup A / serotype 4A (strain DSM 15465 / Z2491) protein is ATP synthase subunit delta.